The chain runs to 623 residues: Membrane protein insertase YidC (623 aa).

The chain crosses the membrane as a helical span at residues 8 to 28 (LILATGLSFLVIMVWFFLFPP). The disordered stretch occupies residues 33–64 (TEGEPTVATQQTAVAPSATPDAPTTAVPPDAD). Residues 44–62 (TAVAPSATPDAPTTAVPPD) show a composition bias toward low complexity. 4 helical membrane passes run 379–399 (MGLAIIALTFLLKALVLPLAY), 449–469 (LPILIQIPIFFSLYKVIFVTI), 507–527 (TTMALIFIGALPILLGVSMWL), and 543–563 (IFAWMPWVFMFMLGHFASGLV). Low complexity predominate over residues 601–617 (KPAAQPAGKAANDGAAP). A disordered region spans residues 601-623 (KPAAQPAGKAANDGAAPAKKRKP).

It belongs to the OXA1/ALB3/YidC family. Type 1 subfamily. As to quaternary structure, interacts with the Sec translocase complex via SecD. Specifically interacts with transmembrane segments of nascent integral membrane proteins during membrane integration.

Its subcellular location is the cell inner membrane. Functionally, required for the insertion and/or proper folding and/or complex formation of integral membrane proteins into the membrane. Involved in integration of membrane proteins that insert both dependently and independently of the Sec translocase complex, as well as at least some lipoproteins. Aids folding of multispanning membrane proteins. This chain is Membrane protein insertase YidC, found in Cereibacter sphaeroides (strain KD131 / KCTC 12085) (Rhodobacter sphaeroides).